Consider the following 159-residue polypeptide: Type-1 angiotensin II receptor-associated protein (159 aa).

Topologically, residues 1-23 are extracellular; sequence MELPAVNLKVILLGHWLLTTWGC. A helical transmembrane segment spans residues 24-44; it reads IVFSGSYAWANFTILALGVWA. Residues 45-55 lie on the Cytoplasmic side of the membrane; it reads VAQRDSIDAIS. Residues 56-76 form a helical membrane-spanning segment; it reads MFLGGLLATIFLDIVHISIFY. Residues 77 to 86 are Extracellular-facing; the sequence is PRVSLTDTGR. A helical membrane pass occupies residues 87 to 107; that stretch reads FGVGMAILSLLLKPLSCCFVY. Residues 108-159 are Cytoplasmic-facing; the sequence is HMYRERGGELLVHTGFLGSSQDRSAYQTIDSAEAPADPFAVPEGRSQDARGY. Residues 110–122 are interaction with AGTR1; it reads YRERGGELLVHTG. Phosphoserine occurs at positions 126 and 127. A Phosphothreonine modification is found at T135. A phosphoserine mark is found at S138 and S153. A disordered region spans residues 140–159; it reads EAPADPFAVPEGRSQDARGY.

Interacts with RACK1, and with the C-terminal region of AGTR1. Ubiquitous but more abundant in kidney, heart, pancreas and thyroid.

Its subcellular location is the endoplasmic reticulum membrane. It is found in the golgi apparatus membrane. The protein localises to the cytoplasmic vesicle membrane. Appears to be a negative regulator of type-1 angiotensin II receptor-mediated signaling by regulating receptor internalization as well as mechanism of receptor desensitization such as phosphorylation. Also induces a decrease in cell proliferation and angiotensin II-stimulated transcriptional activity. In Homo sapiens (Human), this protein is Type-1 angiotensin II receptor-associated protein (AGTRAP).